A 72-amino-acid polypeptide reads, in one-letter code: Translation initiation factor IF-1 (72 aa).

The S1-like domain occupies 1–72 (MAKEEAIEIE…SKGRITYRYK (72 aa)).

It belongs to the IF-1 family. Component of the 30S ribosomal translation pre-initiation complex which assembles on the 30S ribosome in the order IF-2 and IF-3, IF-1 and N-formylmethionyl-tRNA(fMet); mRNA recruitment can occur at any time during PIC assembly.

It localises to the cytoplasm. One of the essential components for the initiation of protein synthesis. Stabilizes the binding of IF-2 and IF-3 on the 30S subunit to which N-formylmethionyl-tRNA(fMet) subsequently binds. Helps modulate mRNA selection, yielding the 30S pre-initiation complex (PIC). Upon addition of the 50S ribosomal subunit IF-1, IF-2 and IF-3 are released leaving the mature 70S translation initiation complex. This Chlorobium luteolum (strain DSM 273 / BCRC 81028 / 2530) (Pelodictyon luteolum) protein is Translation initiation factor IF-1.